Here is a 365-residue protein sequence, read N- to C-terminus: Chorismate synthase (365 aa).

Arg47 is a binding site for NADP(+). FMN contacts are provided by residues 124–126 (RAS), Gly287, 302–306 (KPTAT), and Arg328. The interval 266–290 (FIKSDDSSKLRTTSNNSGGIQGGIS) is disordered.

Belongs to the chorismate synthase family. As to quaternary structure, homotetramer. The cofactor is FMNH2.

It catalyses the reaction 5-O-(1-carboxyvinyl)-3-phosphoshikimate = chorismate + phosphate. The protein operates within metabolic intermediate biosynthesis; chorismate biosynthesis; chorismate from D-erythrose 4-phosphate and phosphoenolpyruvate: step 7/7. Its function is as follows. Catalyzes the anti-1,4-elimination of the C-3 phosphate and the C-6 proR hydrogen from 5-enolpyruvylshikimate-3-phosphate (EPSP) to yield chorismate, which is the branch point compound that serves as the starting substrate for the three terminal pathways of aromatic amino acid biosynthesis. This reaction introduces a second double bond into the aromatic ring system. The polypeptide is Chorismate synthase (Prochlorococcus marinus (strain MIT 9301)).